The following is a 134-amino-acid chain: Profilin-3 (134 aa).

A disulfide bridge connects residues cysteine 13 and cysteine 118. An Involved in PIP2 interaction motif is present at residues 84–100 (AVIRGKKGSGGITIKKT). Residue threonine 114 is modified to Phosphothreonine.

It belongs to the profilin family. Occurs in many kinds of cells as a complex with monomeric actin in a 1:1 ratio. Post-translationally, phosphorylated by MAP kinases.

The protein localises to the cytoplasm. It is found in the cytoskeleton. Its function is as follows. Binds to actin and affects the structure of the cytoskeleton. At high concentrations, profilin prevents the polymerization of actin, whereas it enhances it at low concentrations. The chain is Profilin-3 from Olea europaea (Common olive).